We begin with the raw amino-acid sequence, 1132 residues long: Error-prone DNA polymerase (1132 aa).

This sequence belongs to the DNA polymerase type-C family. DnaE2 subfamily.

It is found in the cytoplasm. The enzyme catalyses DNA(n) + a 2'-deoxyribonucleoside 5'-triphosphate = DNA(n+1) + diphosphate. Its function is as follows. DNA polymerase involved in damage-induced mutagenesis and translesion synthesis (TLS). It is not the major replicative DNA polymerase. The polypeptide is Error-prone DNA polymerase (Anaeromyxobacter dehalogenans (strain 2CP-C)).